The primary structure comprises 531 residues: Tryptophan biosynthesis protein TRP1 (531 aa).

Residues 1–254 (MGNILEEIAA…TVKDLLQNVT (254 aa)) form an indole-3-glycerol phosphate synthase region. Residues 255-531 (RHSESGEFAL…TLKIDEETEN (277 aa)) are N-(5'-phosphoribosyl)anthranilate isomerase.

This sequence in the N-terminal section; belongs to the TrpC family. In the C-terminal section; belongs to the TrpF family.

The enzyme catalyses N-(5-phospho-beta-D-ribosyl)anthranilate = 1-(2-carboxyphenylamino)-1-deoxy-D-ribulose 5-phosphate. The catalysed reaction is 1-(2-carboxyphenylamino)-1-deoxy-D-ribulose 5-phosphate + H(+) = (1S,2R)-1-C-(indol-3-yl)glycerol 3-phosphate + CO2 + H2O. It functions in the pathway amino-acid biosynthesis; L-tryptophan biosynthesis; L-tryptophan from chorismate: step 3/5. The protein operates within amino-acid biosynthesis; L-tryptophan biosynthesis; L-tryptophan from chorismate: step 4/5. In terms of biological role, bifunctional enzyme that catalyzes two sequential steps of tryptophan biosynthetic pathway. This chain is Tryptophan biosynthesis protein TRP1 (TRP1), found in Phytophthora nicotianae (Potato buckeye rot agent).